The primary structure comprises 221 residues: Chaperone protein TorD (221 aa).

It belongs to the TorD/DmsD family. TorD subfamily.

Its subcellular location is the cytoplasm. Involved in the biogenesis of TorA. Acts on TorA before the insertion of the molybdenum cofactor and, as a result, probably favors a conformation of the apoenzyme that is competent for acquiring the cofactor. The chain is Chaperone protein TorD from Shewanella pealeana (strain ATCC 700345 / ANG-SQ1).